We begin with the raw amino-acid sequence, 339 residues long: Leucine-rich repeat-containing protein 59 (339 aa).

Topologically, residues 1–282 are cytoplasmic; sequence MARGGGKSGS…KHSWSRSVLR (282 aa). LRR repeat units follow at residues 10–31, 40–61, 63–84, and 86–107; these read SLKD…SEVP, KATV…FCSL, HLVK…FGRL, and SLQH…FAQL. The stretch at 181–254 forms a coiled coil; it reads MKVIQSEQDR…EMEKKTKKET (74 aa). Positions 186 to 275 are disordered; sequence SEQDRERQRK…PPQPARHKHS (90 aa). The span at 187–256 shows a compositional bias: basic and acidic residues; it reads EQDRERQRKL…EKKTKKETVQ (70 aa). A helical membrane pass occupies residues 283–300; the sequence is ALLLVLLCILCTLAVCKL. Topologically, residues 301-339 are lumenal; it reads TELQHQPLCVSVNTLYEDVVAAVQNHKTLQNMLQQNSQQ.

In terms of assembly, interacts with SGO1.

It localises to the microsome membrane. The protein resides in the endoplasmic reticulum membrane. Its subcellular location is the nucleus envelope. Its function is as follows. Required for nuclear import of FGF1. This Gallus gallus (Chicken) protein is Leucine-rich repeat-containing protein 59 (LRRC59).